A 1158-amino-acid polypeptide reads, in one-letter code: Rho1 guanine nucleotide exchange factor 2 (1158 aa).

Residues 42–141 (RSSGSITHSP…SFSVSDVSNG (100 aa)) form a disordered region. Residues 45–63 (GSITHSPTALSSTTSLNEN) show a composition bias toward polar residues. Residues 68–81 (FRPASSLSFSPSSL) show a composition bias toward low complexity. The segment covering 97–108 (KNNFYRRSSSTD) has biased composition (polar residues). The segment covering 132–141 (SFSVSDVSNG) has biased composition (low complexity). The 188-residue stretch at 447-634 (KRQEIIFEVI…REFLTKLNYE (188 aa)) folds into the DH domain. The 136-residue stretch at 670 to 805 (LIFKGVVKLK…QHIEKQQDII (136 aa)) folds into the PH domain. Residues Ser746 and Ser747 each carry the phosphoserine modification. Positions 825–1120 (GNKLLCAVAY…KLLTDGRGLI (296 aa)) constitute a CNH domain.

The protein resides in the cytoplasm. In terms of biological role, stimulates the exchange of Rho1 and Rho5 GDP-bound form into GTP-bound form. Controls septum formation, cell wall synthesis and localization of F-actin patches. This Schizosaccharomyces pombe (strain 972 / ATCC 24843) (Fission yeast) protein is Rho1 guanine nucleotide exchange factor 2 (rgf2).